The following is a 264-amino-acid chain: ATP synthase subunit a (264 aa).

A run of 5 helical transmembrane segments spans residues 39–59, 97–117, 139–159, 205–225, and 239–259; these read LDTLIISVVLGALFILIFYIV, VAPLALTIFIWVFLMNFMDLV, TADPTLTFAMSITVFVLVIFY, LFGNLFAGELIFILIALLPWW, and LLVITVQAFIFMMLTVVYISL.

The protein belongs to the ATPase A chain family. As to quaternary structure, F-type ATPases have 2 components, CF(1) - the catalytic core - and CF(0) - the membrane proton channel. CF(1) has five subunits: alpha(3), beta(3), gamma(1), delta(1), epsilon(1). CF(0) has three main subunits: a(1), b(2) and c(9-12). The alpha and beta chains form an alternating ring which encloses part of the gamma chain. CF(1) is attached to CF(0) by a central stalk formed by the gamma and epsilon chains, while a peripheral stalk is formed by the delta and b chains.

The protein localises to the cell inner membrane. In terms of biological role, key component of the proton channel; it plays a direct role in the translocation of protons across the membrane. This chain is ATP synthase subunit a, found in Coxiella burnetii (strain RSA 331 / Henzerling II).